The primary structure comprises 209 residues: MQFNPIIIGVAGGSASGKTSVAQAILQRVGADRIAHIDHDRYYKDLSHLPLEERARFNFDHPDALDNDLLVAHLDALCAGQAVDLPTYDYATYVRLPYTERIEPRPVILVEGILIFYEPVLRRRMHIKLFVDTDADLRFIRRLRRDIAERGRSVESVIEQYLATVRPMHLEFVEPTKRYADVIFPGGGRNPIAIDMVVARIEAALQSMA.

G12 to T19 provides a ligand contact to ATP.

This sequence belongs to the uridine kinase family.

Its subcellular location is the cytoplasm. It carries out the reaction uridine + ATP = UMP + ADP + H(+). The enzyme catalyses cytidine + ATP = CMP + ADP + H(+). Its pathway is pyrimidine metabolism; CTP biosynthesis via salvage pathway; CTP from cytidine: step 1/3. The protein operates within pyrimidine metabolism; UMP biosynthesis via salvage pathway; UMP from uridine: step 1/1. This chain is Uridine kinase, found in Chloroflexus aggregans (strain MD-66 / DSM 9485).